Reading from the N-terminus, the 341-residue chain is S-adenosylmethionine:tRNA ribosyltransferase-isomerase (341 aa).

It belongs to the QueA family. As to quaternary structure, monomer.

It localises to the cytoplasm. It carries out the reaction 7-aminomethyl-7-carbaguanosine(34) in tRNA + S-adenosyl-L-methionine = epoxyqueuosine(34) in tRNA + adenine + L-methionine + 2 H(+). It participates in tRNA modification; tRNA-queuosine biosynthesis. Transfers and isomerizes the ribose moiety from AdoMet to the 7-aminomethyl group of 7-deazaguanine (preQ1-tRNA) to give epoxyqueuosine (oQ-tRNA). The sequence is that of S-adenosylmethionine:tRNA ribosyltransferase-isomerase from Trichlorobacter lovleyi (strain ATCC BAA-1151 / DSM 17278 / SZ) (Geobacter lovleyi).